The chain runs to 198 residues: QVLTARTLHGVMQNIRDIVNLKKSEFWNKGGPAWQKIVVCLVFDGIDPCDQNTLDLLATVGIYQDGVMKKDVDARTRLVHIFEYTTQLSVTPNQQLIDPNDNVTTSLPPVQMIFCLKQKNSKKINSHRWLFDGFGRILNPEVCILLDAGTKPGPKSLMSLWEAFYNDKDLGGACGEIHAMLGRGGVFGRKLLNPLVAA.

It belongs to the chitin synthase family. Class III subfamily.

It localises to the cell membrane. The enzyme catalyses [(1-&gt;4)-N-acetyl-beta-D-glucosaminyl](n) + UDP-N-acetyl-alpha-D-glucosamine = [(1-&gt;4)-N-acetyl-beta-D-glucosaminyl](n+1) + UDP + H(+). Its function is as follows. Polymerizes chitin, a structural polymer of the cell wall and septum, by transferring the sugar moiety of UDP-GlcNAc to the non-reducing end of the growing chitin polymer. This Rhinocladiella atrovirens protein is Chitin synthase 2 (CHS2).